The primary structure comprises 306 residues: Curved DNA-binding protein (306 aa).

Positions 5-69 constitute a J domain; sequence DYYAIMGVKP…QRRAEYDQMW (65 aa).

The protein resides in the cytoplasm. Its subcellular location is the nucleoid. In terms of biological role, DNA-binding protein that preferentially recognizes a curved DNA sequence. It is probably a functional analog of DnaJ; displays overlapping activities with DnaJ, but functions under different conditions, probably acting as a molecular chaperone in an adaptive response to environmental stresses other than heat shock. Lacks autonomous chaperone activity; binds native substrates and targets them for recognition by DnaK. Its activity is inhibited by the binding of CbpM. This chain is Curved DNA-binding protein, found in Shigella flexneri.